The sequence spans 394 residues: Cell division protein FtsZ (394 aa).

GTP-binding positions include 21 to 25 (GGGNN), Arg29, 108 to 110 (GTG), Glu139, Arg143, Asn166, and Asp187. The segment at 317–394 (DKPSSQGRKA…EERRSRRTRR (78 aa)) is disordered. 2 stretches are compositionally biased toward low complexity: residues 328–346 (STGF…SGAS) and 353–364 (SAHTSHSQSSES). Residues 365–388 (VSERSHTTKDDDIPSFIRNREERR) are compositionally biased toward basic and acidic residues.

The protein belongs to the FtsZ family. Homodimer. Polymerizes to form a dynamic ring structure in a strictly GTP-dependent manner. Interacts directly with several other division proteins.

The protein localises to the cytoplasm. In terms of biological role, essential cell division protein that forms a contractile ring structure (Z ring) at the future cell division site. The regulation of the ring assembly controls the timing and the location of cell division. One of the functions of the FtsZ ring is to recruit other cell division proteins to the septum to produce a new cell wall between the dividing cells. Binds GTP and shows GTPase activity. This is Cell division protein FtsZ from Staphylococcus epidermidis (strain ATCC 35984 / DSM 28319 / BCRC 17069 / CCUG 31568 / BM 3577 / RP62A).